Here is a 413-residue protein sequence, read N- to C-terminus: Arginine biosynthesis bifunctional protein ArgJ (413 aa).

Positions 158, 184, 195, 285, 408, and 413 each coordinate substrate. Thr-195 acts as the Nucleophile in catalysis.

This sequence belongs to the ArgJ family. Heterotetramer of two alpha and two beta chains.

The protein resides in the cytoplasm. The catalysed reaction is N(2)-acetyl-L-ornithine + L-glutamate = N-acetyl-L-glutamate + L-ornithine. It catalyses the reaction L-glutamate + acetyl-CoA = N-acetyl-L-glutamate + CoA + H(+). The protein operates within amino-acid biosynthesis; L-arginine biosynthesis; L-ornithine and N-acetyl-L-glutamate from L-glutamate and N(2)-acetyl-L-ornithine (cyclic): step 1/1. Its pathway is amino-acid biosynthesis; L-arginine biosynthesis; N(2)-acetyl-L-ornithine from L-glutamate: step 1/4. Its function is as follows. Catalyzes two activities which are involved in the cyclic version of arginine biosynthesis: the synthesis of N-acetylglutamate from glutamate and acetyl-CoA as the acetyl donor, and of ornithine by transacetylation between N(2)-acetylornithine and glutamate. This is Arginine biosynthesis bifunctional protein ArgJ from Bradyrhizobium diazoefficiens (strain JCM 10833 / BCRC 13528 / IAM 13628 / NBRC 14792 / USDA 110).